Reading from the N-terminus, the 518-residue chain is Allene oxide synthase, chloroplastic (518 aa).

The transit peptide at 1–33 directs the protein to the chloroplast; sequence MASISTPFPISLHPKTVRSKPLKFRVLTRPIKA. The heme b site is built by K133, H164, and K168. (13S)-hydroperoxy-(9Z,11E)-octadecadienoate-binding residues include N321 and T389. Residues N321 and T389 each coordinate (13S)-hydroperoxy-(9Z,11E,15Z)-octadecatrienoate. Heme b-binding residues include K469 and C471.

It belongs to the cytochrome P450 family. Heme b is required as a cofactor.

The protein resides in the plastid. It is found in the chloroplast. The protein localises to the plastoglobule. The enzyme catalyses (13S)-hydroperoxy-(9Z,11E,15Z)-octadecatrienoate = (9Z,13S,15Z)-12,13-epoxyoctadeca-9,11,15-trienoate + H2O. The catalysed reaction is (13S)-hydroperoxy-(9Z,11E)-octadecadienoate = (9Z,13S)-12,13-epoxyoctadeca-9,11-dienoate + H2O. It participates in lipid metabolism; oxylipin biosynthesis. Functionally, cytochrome P450 enzyme involved in the biosynthesis of oxylipin jasmonates, important phytohormones acting as growth regulators and signaling molecules for plant defense. Functions as an allene oxide synthase that converts hydroperoxy fatty acids to unstable allene epoxides. Catalyzes the dehydration of 13-HPOTE ((13S)-hydroperoxy-(9Z,11E,15Z)-octadecatrienoate), as well as 13-HPODE ((13S)-hydroperoxy-(9Z,11E)-octadecadienoate). The chain is Allene oxide synthase, chloroplastic (CYP74A) from Arabidopsis thaliana (Mouse-ear cress).